The chain runs to 275 residues: NifU-like protein 5, mitochondrial (275 aa).

Residues 1–61 constitute a mitochondrion transit peptide; it reads MKGLTRLLNS…TNASRNCSRS (61 aa).

It belongs to the NifU family.

The protein localises to the mitochondrion. Its function is as follows. Molecular scaffold for [Fe-S] cluster assembly of mitochondrial iron-sulfur proteins. The chain is NifU-like protein 5, mitochondrial (NIFU5) from Arabidopsis thaliana (Mouse-ear cress).